Consider the following 621-residue polypeptide: F-box only protein 21 (621 aa).

An F-box domain is found at 28–77 (SCLVNLPGEVLEYILCCGSLTAADIGRVSSTCRRLRELCQSSGKVWKEQF).

Interacts with SKP1 and CUL1.

Its function is as follows. Substrate-recognition component of the SCF (SKP1-CUL1-F-box protein)-type E3 ubiquitin ligase complex. The chain is F-box only protein 21 (FBXO21) from Pongo abelii (Sumatran orangutan).